Here is a 301-residue protein sequence, read N- to C-terminus: Runt-related transcription factor rnt-1 (301 aa).

The region spanning 10 to 138 (NFIEQQPAPA…TVDGPRDARI (129 aa)) is the Runt domain. 3 interaction with DNA regions span residues 40-44 (RSNKS), 95-103 (RFVGRSGRG), and 128-137 (VTVDGPRDAR). Residues R99 and V130 each contribute to the chloride site. The interval 237-301 (PSIFITPTSD…SSSPTIWRPF (65 aa)) is disordered. S255 is modified (phosphoserine). Residues 255–276 (SPRSITKSSETSINLIQETPES) show a composition bias toward polar residues. Positions 285 to 301 (VSITSSNSSSPTIWRPF) are enriched in low complexity.

As to quaternary structure, interacts with CBFbeta homolog bro-1; acts to increase the affinity and specificity of interaction of rnt-1 with DNA. Interacts with TGF-beta pathway protein sma-4. May be ubiquitinated in order to be targeted for proteasome-mediated degradation in intestinal cells. Post-translationally, may be phosphorylated by members of the p38 MAP kinase pathway. As to expression, expressed in the intestine.

Its subcellular location is the nucleus. In terms of biological role, transcription factor. Binds to regulatory DNA sequences in order to modulate transcription; negatively autoregulates its own expression, perhaps dependent upon CBF beta homolog bro-1. Promotes proliferation, and prevents differentiation, of seam cells, a stem cell-like lineage, acting in concert with bro-1. Required for controlling cell proliferation in the seam cells, perhaps by repressing expression of cyclin-dependent kinase inhibitor cki-1. Inhibition of seam cell differentiation is regulated by rnt-1 and bro-1, perhaps acting upstream of pop-1, by antagonizing pop-1 repressor function. Required for asymmetrical cell divisions in the lineage derived from a posterior embryonic seam cell, the T blast cell, and for asymmetric expression of zinc finger protein tlp-1. Regulates growth and male tail development. Involved in the oxidative stress response, perhaps downstream of the p38 MAP kinase pathway, and acting as part of a negative feedback loop via a transcriptional target gene, tyrosine-protein phosphatase vhp-1. Positively modulates dopaminergic signaling in a non-cell autonomous manner. May be involved in TGF-beta signaling. The protein is Runt-related transcription factor rnt-1 of Caenorhabditis elegans.